A 238-amino-acid polypeptide reads, in one-letter code: MAWIRPDGRRPDQLRAIAFQRRFTQFPAGSVLAQFGQTQVLCTVTIQAGVPRWLTGQGQGWLTAEYRMLPGATPDRQSREWLKLSGRTQEIQRLIGRSLRAAIDLKKLGERTLLIDADVLQADAGTRTTAINGSWVALQDAIAQLIAQGELTESPIQRSIAAVSVALIGGEAFLDPDYPEDVQADVDCNVVMGDRGELIEIQGTAEANPFSRTQLNHILDLAEQGIAQIQAAQLEALR.

Residues Arg87 and 125 to 127 (GTR) each bind phosphate.

The protein belongs to the RNase PH family. As to quaternary structure, homohexameric ring arranged as a trimer of dimers.

It carries out the reaction tRNA(n+1) + phosphate = tRNA(n) + a ribonucleoside 5'-diphosphate. Functionally, phosphorolytic 3'-5' exoribonuclease that plays an important role in tRNA 3'-end maturation. Removes nucleotide residues following the 3'-CCA terminus of tRNAs; can also add nucleotides to the ends of RNA molecules by using nucleoside diphosphates as substrates, but this may not be physiologically important. Probably plays a role in initiation of 16S rRNA degradation (leading to ribosome degradation) during starvation. This Synechococcus elongatus (strain ATCC 33912 / PCC 7942 / FACHB-805) (Anacystis nidulans R2) protein is Ribonuclease PH.